A 660-amino-acid polypeptide reads, in one-letter code: Glycogen debranching enzyme (660 aa).

Aspartate 338 (nucleophile) is an active-site residue. Residue glutamate 373 is the Proton donor of the active site. Residues 460 to 472 show a composition bias toward basic and acidic residues; that stretch reads NEANGEDNRDGAW. The tract at residues 460–482 is disordered; it reads NEANGEDNRDGAWENHSNNHGYE.

This sequence belongs to the glycosyl hydrolase 13 family.

It carries out the reaction Hydrolysis of (1-&gt;6)-alpha-D-glucosidic linkages to branches with degrees of polymerization of three or four glucose residues in limit dextrin.. The protein operates within glycan degradation; glycogen degradation. In terms of biological role, removes maltotriose and maltotetraose chains that are attached by 1,6-alpha-linkage to the limit dextrin main chain, generating a debranched limit dextrin. The sequence is that of Glycogen debranching enzyme from Cronobacter sakazakii (strain ATCC BAA-894) (Enterobacter sakazakii).